We begin with the raw amino-acid sequence, 561 residues long: Tudor and KH domain-containing protein (561 aa).

KH domains follow at residues 52–115 (DIEI…KAAI) and 124–190 (PVSE…KHLI). Glycyl lysine isopeptide (Lys-Gly) (interchain with G-Cter in ubiquitin) cross-links involve residues Lys65, Lys76, Lys110, Lys112, Lys152, Lys175, Lys181, Lys187, Lys193, Lys256, and Lys267. Residues 219–262 (SVRREDMTEPGGAGEPALWKNTSSSMEPTAPLVTPPPKGGGDMA) form a disordered region. Position 278 is a phosphoserine (Ser278). Residues 353 to 412 (TVHVGDIVAAPLPTNGSWYRARVLGTLENGNLDLYFVDFGDNGDCPLKDLRALRSDFLSL) form the Tudor domain. Glycyl lysine isopeptide (Lys-Gly) (interchain with G-Cter in ubiquitin) cross-links involve residues Lys479, Lys510, and Lys529.

It belongs to the Tdrkh family. As to quaternary structure, interacts with (symmetrically methylated) PIWIL1, PIWIL2 and PIWIL4. Ubiquitinated by PRKN during mitophagy, leading to its degradation and enhancement of mitophagy. Deubiquitinated by USP30.

It is found in the cytoplasm. It localises to the mitochondrion. Its function is as follows. Participates in the primary piRNA biogenesis pathway and is required during spermatogenesis to repress transposable elements and prevent their mobilization, which is essential for the germline integrity. The piRNA metabolic process mediates the repression of transposable elements during meiosis by forming complexes composed of piRNAs and Piwi proteins and govern the methylation and subsequent repression of transposons. Required for the final steps of primary piRNA biogenesis by participating in the processing of 31-37 nt intermediates into mature piRNAs. May act in pi-bodies and piP-bodies by transferring piRNA precursors or intermediates to or between these granules. This chain is Tudor and KH domain-containing protein (TDRKH), found in Homo sapiens (Human).